A 323-amino-acid polypeptide reads, in one-letter code: Acetyl-coenzyme A carboxylase carboxyl transferase subunit alpha 1 (323 aa).

Residues 39 to 293 (RLSKKSQQLT…RRALGDSLRQ (255 aa)) form the CoA carboxyltransferase C-terminal domain.

This sequence belongs to the AccA family. In terms of assembly, acetyl-CoA carboxylase is a heterohexamer composed of biotin carboxyl carrier protein (AccB), biotin carboxylase (AccC) and two subunits each of ACCase subunit alpha (AccA) and ACCase subunit beta (AccD).

It localises to the cytoplasm. The enzyme catalyses N(6)-carboxybiotinyl-L-lysyl-[protein] + acetyl-CoA = N(6)-biotinyl-L-lysyl-[protein] + malonyl-CoA. Its pathway is lipid metabolism; malonyl-CoA biosynthesis; malonyl-CoA from acetyl-CoA: step 1/1. In terms of biological role, component of the acetyl coenzyme A carboxylase (ACC) complex. First, biotin carboxylase catalyzes the carboxylation of biotin on its carrier protein (BCCP) and then the CO(2) group is transferred by the carboxyltransferase to acetyl-CoA to form malonyl-CoA. Its function is as follows. Does not confer resistance to the endogenous polyketide antibiotic thailandamide, does not confer resistance to thailandamide when expressed in S.typhimurium. This Burkholderia thailandensis (strain ATCC 700388 / DSM 13276 / CCUG 48851 / CIP 106301 / E264) protein is Acetyl-coenzyme A carboxylase carboxyl transferase subunit alpha 1.